The chain runs to 99 residues: MANNKSSKKRVEIGERNRLQNKAYKSALRTLMKRCFTACSAYIEAPGDEAKTTLTTSLNAAFSKIDKAVKRGVMHRNAGAHQKSRLSIAVKRAIEPSVS.

Belongs to the bacterial ribosomal protein bS20 family.

Binds directly to 16S ribosomal RNA. The polypeptide is Small ribosomal subunit protein bS20 (Synechococcus sp. (strain CC9311)).